Consider the following 1595-residue polypeptide: A disintegrin and metalloproteinase with thrombospondin motifs 7 (1595 aa).

The first 20 residues, Met-1–Gly-20, serve as a signal peptide directing secretion. The propeptide occupies Pro-21–Arg-217. 2 N-linked (GlcNAc...) asparagine glycosylation sites follow: Asn-84 and Asn-105. The disordered stretch occupies residues Pro-165–Ser-218. The Cysteine switch motif lies at Gly-189–Ser-196. Zn(2+) is bound at residue Cys-191. Positions Glu-198–Gln-210 are enriched in basic and acidic residues. Residues Lys-223–Pro-434 form the Peptidase M12B domain. Cystine bridges form between Cys-299–Cys-353, Cys-328–Cys-335, Cys-347–Cys-429, Cys-386–Cys-413, Cys-456–Cys-479, Cys-467–Cys-485, Cys-474–Cys-504, Cys-498–Cys-509, Cys-532–Cys-569, Cys-536–Cys-574, and Cys-547–Cys-559. Residue His-369 participates in Zn(2+) binding. The active site involves Glu-370. His-373 and His-379 together coordinate Zn(2+). One can recognise a Disintegrin domain in the interval Val-444–Val-519. One can recognise a TSP type-1 1 domain in the interval Asp-520 to Pro-575. An N-linked (GlcNAc...) asparagine glycan is attached at Asn-619. The interval His-680–Gln-791 is spacer. 3 TSP type-1 domains span residues Pro-801–Pro-860, Ala-861–Tyr-917, and Cys-922–Gln-975. Disordered regions lie at residues Gly-989–Pro-1035, Pro-1077–Pro-1121, Arg-1179–Asp-1234, and Lys-1255–Asp-1315. Composition is skewed to pro residues over residues Gln-1005–Ser-1015 and His-1079–Ser-1089. Positions Ser-1220 to Ser-1232 are enriched in low complexity. The segment covering Gln-1268–Pro-1280 has biased composition (polar residues). TSP type-1 domains are found at residues Lys-1320–His-1368, Pro-1371–Leu-1431, Trp-1433–Thr-1476, and Pro-1478–Glu-1538. Positions Glu-1541 to Ser-1581 constitute a PLAC domain.

As to quaternary structure, interacts with COMP. Zn(2+) is required as a cofactor. Glycosylated. Can be O-fucosylated by POFUT2 on a serine or a threonine residue found within the consensus sequence C1-X(2)-(S/T)-C2-G of the TSP type-1 repeat domains where C1 and C2 are the first and second cysteine residue of the repeat, respectively. Fucosylated repeats can then be further glycosylated by the addition of a beta-1,3-glucose residue by the glucosyltransferase, B3GALTL. Fucosylation mediates the efficient secretion of ADAMTS family members. Can also be C-glycosylated with one or two mannose molecules on tryptophan residues within the consensus sequence W-X-X-W of the TPRs. N- and C-glycosylations can also facilitate secretion. In terms of processing, O-glycosylated proteoglycan; contains chondroitin sulfate. Post-translationally, may be cleaved by a furin endopeptidase. The precursor is sequentially processed. Detected in liver, ovary, kidney, testicle, lung and embryo.

The protein localises to the secreted. The protein resides in the extracellular space. It localises to the extracellular matrix. In terms of biological role, metalloprotease. Was previously shown to degrade COMP. However, a later study found no activity against COMP. This chain is A disintegrin and metalloproteinase with thrombospondin motifs 7 (Adamts7), found in Rattus norvegicus (Rat).